The primary structure comprises 138 residues: Large ribosomal subunit protein uL16 (138 aa).

The segment covering 1-13 has biased composition (basic residues); it reads MLQPSRRKYRKEQ. The segment at 1–20 is disordered; the sequence is MLQPSRRKYRKEQKGRNTGL.

It belongs to the universal ribosomal protein uL16 family. As to quaternary structure, part of the 50S ribosomal subunit.

Its function is as follows. Binds 23S rRNA and is also seen to make contacts with the A and possibly P site tRNAs. This is Large ribosomal subunit protein uL16 from Bordetella avium (strain 197N).